We begin with the raw amino-acid sequence, 524 residues long: 3-epi-6-deoxocathasterone 23-monooxygenase CYP90C1 (524 aa).

A helical membrane pass occupies residues 25-45 (YLVAGFLVLTAGILLRPWLWL). A heme-binding site is contributed by Cys-463.

The protein belongs to the cytochrome P450 family. It depends on heme as a cofactor. As to expression, widely expressed.

The protein localises to the endoplasmic reticulum membrane. It catalyses the reaction 3-epi-6-deoxocathasterone + reduced [NADPH--hemoprotein reductase] + O2 = 6-deoxotyphasterol + oxidized [NADPH--hemoprotein reductase] + H2O + H(+). The enzyme catalyses (22S,24R)-22-hydroxy-5alpha-ergostan-3-one + reduced [NADPH--hemoprotein reductase] + O2 = 3-dehydro-6-deoxoteasterone + oxidized [NADPH--hemoprotein reductase] + H2O + H(+). It participates in plant hormone biosynthesis; brassinosteroid biosynthesis. In terms of biological role, involved in brassinosteroid (BR) biosynthesis. Converts typhasterol (TY) to cathasterone (CS) and 6-deoxotyphasterol (6-deoxoTY) to 6-deoxocathasterone (6-deoxoCT). C-23 hydroxylase that converts directly (22S,24R)-22-hydroxy-5-alpha-ergostan-3-one and 3-epi-6-deoxocathasterone to 3-dehydro-6-deoxoteasterone (6-deoxo3DT, 6-deoxo3DHT) and 6-deoxotyphasterol (6-deoxoTY), respectively. These C-23 hydroxylation shortcuts bypass campestanol, 6-deoxocathasterone, and 6-deoxoteasterone (6-deoxoTE). Also catalyzes the conversion of cathasterone to teasterone (TE), (22S,24R)-22-hydroxyergost-4-en-3-one (22-OH-4-en-3-one) to (22R,23R)-22,23-dihydroxy-campest-4-en-3-one (22,23-diOH-4-en-3-one) and (22S)-22-hydroxycampesterol (22-OHCR) to (22R,23R)-22,23-dihydroxycampesterol (22,23-diOHCR). Required for the regulation of polar elongation of leaf cells. Required for the longitudinal elongation of floral organs. In Arabidopsis thaliana (Mouse-ear cress), this protein is 3-epi-6-deoxocathasterone 23-monooxygenase CYP90C1.